The chain runs to 304 residues: 2-oxoacid:ferredoxin oxidoreductase 2, subunit beta (304 aa).

3 residues coordinate [4Fe-4S] cluster: C12, C15, and C46. Thiamine diphosphate is bound by residues 44-47 (IGCS) and H65. D90 contacts Mg(2+). 91–92 (GD) is a binding site for thiamine diphosphate. Residues N118 and V120 each coordinate Mg(2+). Residue 122–123 (GL) participates in thiamine diphosphate binding. Residue C197 participates in [4Fe-4S] cluster binding.

In terms of assembly, heterodimer composed of an alpha and a beta subunit. [4Fe-4S] cluster serves as cofactor. Requires thiamine diphosphate as cofactor. The cofactor is Mg(2+).

The catalysed reaction is a 2-oxocarboxylate + 2 oxidized [2Fe-2S]-[ferredoxin] + CoA = an acyl-CoA + 2 reduced [2Fe-2S]-[ferredoxin] + CO2 + H(+). Functionally, catalyzes the coenzyme A-dependent oxidative decarboxylation of different 2-oxoacids such as 2-oxoglutarate, pyruvate and 2-oxobutyrate to form their CoA derivatives. The protein is 2-oxoacid:ferredoxin oxidoreductase 2, subunit beta of Sulfurisphaera tokodaii (strain DSM 16993 / JCM 10545 / NBRC 100140 / 7) (Sulfolobus tokodaii).